The chain runs to 83 residues: Large ribosomal subunit protein uL24 (83 aa).

The protein belongs to the universal ribosomal protein uL24 family. As to quaternary structure, part of the 50S ribosomal subunit.

In terms of biological role, one of two assembly initiator proteins, it binds directly to the 5'-end of the 23S rRNA, where it nucleates assembly of the 50S subunit. Functionally, one of the proteins that surrounds the polypeptide exit tunnel on the outside of the subunit. This is Large ribosomal subunit protein uL24 from Symbiobacterium thermophilum (strain DSM 24528 / JCM 14929 / IAM 14863 / T).